The following is an 888-amino-acid chain: Prodigiosin synthesizing transferase PigC (888 aa).

It belongs to the PigC family.

It functions in the pathway antibiotic biosynthesis; prodigiosin biosynthesis. Functionally, involved in the biosynthesis of 2-methyl-3-n-amyl-pyrrole (MAP), one of the terminal products involved in the biosynthesis of the red antibiotic prodigiosin (Pig). Catalyzes the transfer of 2-methyl-3-n-amyl-pyrrole (MAP) to 4-methoxy-2,2'-bipyrrole-5-carbaldehyde (MBC) to yield prodigiosin. It is able to use substrates with a variety of monocyclic rings in place of the pyrrolic ring A of its natural substrate. In Serratia marcescens, this protein is Prodigiosin synthesizing transferase PigC.